Reading from the N-terminus, the 84-residue chain is MSILSFLLGEKKKSASVAKERLQIILAHERTGHSAPADYLPALQRELVAVISKYVKIGDQDLRVSLERQDNLEVLEVKIEIPQH.

The protein belongs to the MinE family.

Functionally, prevents the cell division inhibition by proteins MinC and MinD at internal division sites while permitting inhibition at polar sites. This ensures cell division at the proper site by restricting the formation of a division septum at the midpoint of the long axis of the cell. The chain is Cell division topological specificity factor from Cupriavidus taiwanensis (strain DSM 17343 / BCRC 17206 / CCUG 44338 / CIP 107171 / LMG 19424 / R1) (Ralstonia taiwanensis (strain LMG 19424)).